Consider the following 64-residue polypeptide: Small cysteine-rich protein (64 aa).

Positions 1–17 (FVCVQARQIDPEQILRT) are cleaved as a signal peptide. Residues 18–19 (PE) constitute a propeptide that is removed on maturation.

Post-translationally, contains 4 disulfide bonds.

Its subcellular location is the secreted. The protein resides in the nematocyst. This chain is Small cysteine-rich protein, found in Anemonia viridis (Snakelocks anemone).